The primary structure comprises 248 residues: PF03932 family protein CutC (248 aa).

The protein belongs to the CutC family. Homodimer.

Its subcellular location is the cytoplasm. This chain is PF03932 family protein CutC, found in Shigella boydii serotype 18 (strain CDC 3083-94 / BS512).